Reading from the N-terminus, the 482-residue chain is Dihydrolipoyllysine-residue acetyltransferase component of pyruvate dehydrogenase complex, mitochondrial (482 aa).

The N-terminal 28 residues, 1 to 28, are a transit peptide targeting the mitochondrion; it reads MSAFVRVVPRISRSSVLTRSLRLQLRCY. A Lipoyl-binding domain is found at 34–110; that stretch reads HTIIGMPALS…PVNKPIAVYV (77 aa). Position 75 is an N6-lipoyllysine (lysine 75). The segment at 122–170 is disordered; it reads FKLEDSGSDSKTSTKAQPAEPQAEKKQEAPAEETKTSAPEAKKSDVAAP. Basic and acidic residues predominate over residues 143–166; that stretch reads QAEKKQEAPAEETKTSAPEAKKSD. The Peripheral subunit-binding (PSBD) domain maps to 175–212; the sequence is FASPLAKTIALEKGISLKDVHGTGPRGRITKADIESYL. The disordered stretch occupies residues 214 to 251; sequence KSSKQSSQTSGAAAATPAAATSSTTAGSAPSPSSTASY. The segment covering 217 to 250 has biased composition (low complexity); sequence KQSSQTSGAAAATPAAATSSTTAGSAPSPSSTAS. Residues histidine 455 and aspartate 459 contribute to the active site.

The protein belongs to the 2-oxoacid dehydrogenase family. Eukaryotic pyruvate dehydrogenase (PDH) complexes are organized as a core consisting of the oligomeric dihydrolipoamide acetyl-transferase (E2), around which are arranged multiple copies of pyruvate dehydrogenase (E1), dihydrolipoamide dehydrogenase (E3) and protein X (E3BP) bound by non-covalent bonds. Requires (R)-lipoate as cofactor.

The protein resides in the mitochondrion matrix. It carries out the reaction N(6)-[(R)-dihydrolipoyl]-L-lysyl-[protein] + acetyl-CoA = N(6)-[(R)-S(8)-acetyldihydrolipoyl]-L-lysyl-[protein] + CoA. Its function is as follows. The pyruvate dehydrogenase complex catalyzes the overall conversion of pyruvate to acetyl-CoA and CO(2). This chain is Dihydrolipoyllysine-residue acetyltransferase component of pyruvate dehydrogenase complex, mitochondrial (LAT1), found in Saccharomyces cerevisiae (strain ATCC 204508 / S288c) (Baker's yeast).